The following is a 365-amino-acid chain: MAKQTPLYDQHVACGARMVDFHGWMMPLHYGSQIDEHHAVRQDAGMFDVSHMTIVDLRGARTREFLRYLLANDVAKLTQPGKALYTGMLNASGGVIDDLIVYFLTEDYFRLVVNSATREKDLAWIEEHAAPYGVALTVRDDLALVAVQGPQAKERAATLFTPEQKSAVEGMKPFFGVQAGDLFIATTGYTGEAGYEIALPKEQVVDFWQKLLAAGVKPAGLGARDTLRLEAGMNLYGQEMDEGVSPLAANMGWTIAWLPEDRQFIGREALEKQREMGTEQLVGLIMTEKGVLRNELPVRFTDEAGQTHEGIITSGSFSPTLGFSIALARVPAGIGEQAIVQIRNREMPVKVTKPGFVRAGKPLTN.

Belongs to the GcvT family. The glycine cleavage system is composed of four proteins: P, T, L and H.

The catalysed reaction is N(6)-[(R)-S(8)-aminomethyldihydrolipoyl]-L-lysyl-[protein] + (6S)-5,6,7,8-tetrahydrofolate = N(6)-[(R)-dihydrolipoyl]-L-lysyl-[protein] + (6R)-5,10-methylene-5,6,7,8-tetrahydrofolate + NH4(+). Functionally, the glycine cleavage system catalyzes the degradation of glycine. In Serratia proteamaculans (strain 568), this protein is Aminomethyltransferase.